Consider the following 1068-residue polypeptide: Self-sufficient cytochrome P450 monooxygenase CYP505U2 (1068 aa).

Cys408 is a heme binding site. The interval 464–498 (TTAGMVPESVQSLRQAQKSGKPGNSKSSANESMVG) is disordered. Over residues 472–498 (SVQSLRQAQKSGKPGNSKSSANESMVG) the composition is skewed to polar residues. Residues 505 to 646 (VSIFYGSNSG…DLEKWEESIL (142 aa)) form the Flavodoxin-like domain. Residues 511–515 (SNSGS) and 590–622 (VFGCGHHDWATTFYKIPILIDELLEQRGAQRVA) each bind FMN. Positions 679–909 (KEFLEATVTS…RRSNPAFHPP (231 aa)) constitute an FAD-binding FR-type domain.

In the N-terminal section; belongs to the cytochrome P450 family. Requires FAD as cofactor. FMN is required as a cofactor. Heme serves as cofactor.

The catalysed reaction is 2 oxidized [cytochrome P450] + NADPH = 2 reduced [cytochrome P450] + NADP(+) + H(+). It catalyses the reaction an organic molecule + reduced [NADPH--hemoprotein reductase] + O2 = an alcohol + oxidized [NADPH--hemoprotein reductase] + H2O + H(+). The enzyme catalyses dodecanoate + reduced [NADPH--hemoprotein reductase] + O2 = 3-hydroxydodecanoate + oxidized [NADPH--hemoprotein reductase] + H2O + H(+). It carries out the reaction dodecanoate + reduced [NADPH--hemoprotein reductase] + O2 = 7-hydroxydodecanoate + oxidized [NADPH--hemoprotein reductase] + H2O + H(+). The catalysed reaction is dodecan-1-ol + reduced [NADPH--hemoprotein reductase] + O2 = 1,4-dodecanediol + oxidized [NADPH--hemoprotein reductase] + H2O + H(+). It catalyses the reaction dodecan-1-ol + reduced [NADPH--hemoprotein reductase] + O2 = 1,3-dodecanediol + oxidized [NADPH--hemoprotein reductase] + H2O + H(+). Functionally, self-sufficient cytochrome P450 monooxygenase that catalyzes the regioselective in-chain hydroxylation of alkanes, fatty alcohols, and fatty acids. Preferentially hydroxylates 1-dodecanol at C3 and C4 (positions omega-8 and omega-9). It is very likely that CYP505U2 prefers dodecanol, and probably other fatty alcohols, over fatty acids as substrates. Does not show any significant activity toward tetradecanoic acid. In Exserohilum turcicum (strain 28A) (Northern leaf blight fungus), this protein is Self-sufficient cytochrome P450 monooxygenase CYP505U2.